The following is an 889-amino-acid chain: Serine/threonine-protein kinase D3 (889 aa).

A phosphoserine mark is found at serine 27, serine 37, serine 41, and serine 44. The segment at 154–204 adopts a Phorbol-ester/DAG-type 1 zinc-finger fold; the sequence is PHALYVHSYKAPTFCDYCGEMLWGLVRQGLKCEGCGLNYHKRCAFKIPNNC. Residues serine 213 and serine 216 each carry the phosphoserine modification. The segment at 271–321 adopts a Phorbol-ester/DAG-type 2 zinc-finger fold; it reads PHTFAVHSYGRPTICQYCKRLLKGLFRQGMQCKDCKFNCHKRCASKVPRDC. Positions 336 to 370 are disordered; the sequence is TDADMPMDIDSSDVNSDGSRGLDDSEEPSPPEDKM. 3 positions are modified to phosphoserine: serine 346, serine 391, and serine 395. Residues 416–532 enclose the PH domain; the sequence is TVVKEGWMVH…WEKAIRQALM (117 aa). Tyrosine 426 carries the post-translational modification Phosphotyrosine. Serine 442 carries the phosphoserine modification. At tyrosine 457 the chain carries Phosphotyrosine. Threonine 535 carries the post-translational modification Phosphothreonine. Residue serine 539 is modified to Phosphoserine. A Protein kinase domain is found at 575–831; sequence IFADEVLGSG…VDKSLSHPWL (257 aa). ATP contacts are provided by residues 581-589 and lysine 604; that span reads LGSGQFGIV. Aspartate 698 (proton acceptor) is an active-site residue. A Phosphoserine; by PKC modification is found at serine 730. At serine 734 the chain carries Phosphoserine; by autocatalysis. Tyrosine 741 bears the Phosphotyrosine mark.

Belongs to the protein kinase superfamily. CAMK Ser/Thr protein kinase family. PKD subfamily. Mg(2+) serves as cofactor.

The protein resides in the cytoplasm. It is found in the membrane. The enzyme catalyses L-seryl-[protein] + ATP = O-phospho-L-seryl-[protein] + ADP + H(+). The catalysed reaction is L-threonyl-[protein] + ATP = O-phospho-L-threonyl-[protein] + ADP + H(+). Its activity is regulated as follows. Activated by DAG and phorbol esters. Phorbol-ester/DAG-type domains 1 and 2 bind both DAG and phorbol ester with high affinity and mediate translocation to the cell membrane. Autophosphorylation of Ser-734 and phosphorylation of Ser-730 by PKC relieves auto-inhibition by the PH domain. Functionally, converts transient diacylglycerol (DAG) signals into prolonged physiological effects, downstream of PKC. Involved in resistance to oxidative stress. The chain is Serine/threonine-protein kinase D3 (Prkd3) from Mus musculus (Mouse).